Consider the following 310-residue polypeptide: MTTRTEAVKAYLLDLQDRICSALETFETDTRFIEDAWTRPAGGGGRTRVIENGSVIEKGGVNFSHVFGSGLPPSASAHRPELAGRGFEALGVSLVIHPHNPHVPTSHANVRFFIAEKEGEEPVWWFGGGFDLTPYYGNEEDCIHWHRVAEQACAPFGPDVYSRYKAWCDTYFHIKHRNEPRGIGGLFFDDLNEWDFDTCFAFIRAIGDAYIDAYLPIVQRRKAMAYTEQQRQFQEFRRGRYVEFNLVYDRGTLFGLQSGGRTESILMSLPPQVRWSYDWKAEVGSEEARLTDYFLQDRDWLGLTAPKAAV.

A substrate-binding site is contributed by serine 93. Histidine 97 and histidine 107 together coordinate a divalent metal cation. Histidine 107 acts as the Proton donor in catalysis. 109-111 (NVR) provides a ligand contact to substrate. Histidine 146 and histidine 176 together coordinate a divalent metal cation. Positions 241 to 276 (YVEFNLVYDRGTLFGLQSGGRTESILMSLPPQVRWS) are important for dimerization. 259–261 (GGR) provides a ligand contact to substrate.

Belongs to the aerobic coproporphyrinogen-III oxidase family. In terms of assembly, homodimer. The cofactor is a divalent metal cation.

Its subcellular location is the cytoplasm. It catalyses the reaction coproporphyrinogen III + O2 + 2 H(+) = protoporphyrinogen IX + 2 CO2 + 2 H2O. The protein operates within porphyrin-containing compound metabolism; protoporphyrin-IX biosynthesis; protoporphyrinogen-IX from coproporphyrinogen-III (O2 route): step 1/1. Functionally, involved in the heme biosynthesis. Catalyzes the aerobic oxidative decarboxylation of propionate groups of rings A and B of coproporphyrinogen-III to yield the vinyl groups in protoporphyrinogen-IX. The sequence is that of Oxygen-dependent coproporphyrinogen-III oxidase from Pseudomonas fluorescens (strain SBW25).